A 630-amino-acid chain; its full sequence is FAST kinase domain-containing protein 4 (630 aa).

One can recognise an RAP domain in the interval 560 to 618 (IAFLRWEFPNFNSRSKDLLGRFVLARRHVLAAGFLVVDVPYYEWLDLKSEWQKSAYLKD).

It belongs to the FAST kinase family. Expression detected in spleen, testis, colon, heart, smooth muscle, kidney, brain, lung, liver, brown and white adipose tissue with highest expression in testis, heart, smooth muscle and brown adipose tissue.

The protein resides in the mitochondrion matrix. Functionally, plays a role in processing of mitochondrial RNA precursors and in stabilization of a subset of mature mitochondrial RNA species, such as MT-CO1, MT-CO2, MT-CYB, MT-CO3, MT-ND3, MT-ND5 and MT-ATP8/6. May play a role in cell cycle progression. In Mus musculus (Mouse), this protein is FAST kinase domain-containing protein 4 (Tbrg4).